A 1258-amino-acid polypeptide reads, in one-letter code: uncharacterized protein (1258 aa).

One copy of the WD 1 repeat lies at glutamate 55–glutamate 93. The span at glycine 112–lysine 128 shows a compositional bias: basic and acidic residues. Residues glycine 112 to aspartate 138 are disordered. WD repeat units follow at residues glutamate 640 to isoleucine 679, glycine 682 to threonine 721, glycine 724 to threonine 763, glycine 766 to lysine 807, histidine 809 to isoleucine 849, glycine 850 to threonine 889, glycine 892 to alanine 931, glycine 934 to glutamate 975, glycine 976 to leucine 1017, histidine 1019 to serine 1059, glutamate 1060 to arginine 1101, histidine 1103 to threonine 1143, glycine 1144 to isoleucine 1183, and glycine 1186 to arginine 1227.

This is an uncharacterized protein from Nostoc sp. (strain PCC 7120 / SAG 25.82 / UTEX 2576).